A 173-amino-acid chain; its full sequence is Peptidyl-prolyl cis-trans isomerase 3 (173 aa).

The region spanning 7–170 is the PPIase cyclophilin-type domain; it reads FFDITIGGKA…KDCMIADCGQ (164 aa).

Belongs to the cyclophilin-type PPIase family. As to expression, exclusively expressed in the single anterior excretory cell.

The enzyme catalyses [protein]-peptidylproline (omega=180) = [protein]-peptidylproline (omega=0). Functionally, catalyzes the cis-trans isomerization of proline imidic peptide bonds in oligopeptides. Plays a role in protein folding, transport and assembly. The sequence is that of Peptidyl-prolyl cis-trans isomerase 3 (cyn-3) from Caenorhabditis elegans.